Reading from the N-terminus, the 432-residue chain is Adenosylhomocysteinase (432 aa).

The substrate site is built by threonine 57, aspartate 131, and glutamate 156. 157–159 contacts NAD(+); the sequence is TTT. Phosphoserine is present on serine 183. 2 residues coordinate substrate: lysine 186 and aspartate 190. Lysine 186 carries the post-translational modification N6-(2-hydroxyisobutyryl)lysine. Tyrosine 193 is subject to Phosphotyrosine. NAD(+) is bound by residues 222–227, glutamate 243, asparagine 248, 299–301, asparagine 346, histidine 353, lysine 426, 426–430, and tyrosine 430; these read GDVGKG, IGH, and KPDHY.

The protein belongs to the adenosylhomocysteinase family. In terms of assembly, homotetramer. Interaction with AHCYL1. It depends on NAD(+) as a cofactor.

Its subcellular location is the cytoplasm. The protein resides in the melanosome. It localises to the nucleus. It is found in the endoplasmic reticulum. It carries out the reaction S-adenosyl-L-homocysteine + H2O = L-homocysteine + adenosine. It functions in the pathway amino-acid biosynthesis; L-homocysteine biosynthesis; L-homocysteine from S-adenosyl-L-homocysteine: step 1/1. Catalyzes the hydrolysis of S-adenosyl-L-homocysteine to form adenosine and homocysteine. Binds copper ions. The sequence is that of Adenosylhomocysteinase (Ahcy) from Rattus norvegicus (Rat).